A 99-amino-acid polypeptide reads, in one-letter code: Malonate decarboxylase acyl carrier protein (99 aa).

At Ser-25 the chain carries O-(phosphoribosyl dephospho-coenzyme A)serine.

This sequence belongs to the MdcC family. Covalently binds the prosthetic group of malonate decarboxylase.

The protein localises to the cytoplasm. Subunit of malonate decarboxylase, it is an acyl carrier protein to which acetyl and malonyl thioester residues are bound via a 2'-(5''-phosphoribosyl)-3'-dephospho-CoA prosthetic group and turn over during the catalytic mechanism. The sequence is that of Malonate decarboxylase acyl carrier protein from Pseudomonas fluorescens (strain ATCC BAA-477 / NRRL B-23932 / Pf-5).